The following is a 354-amino-acid chain: UPF0597 protein PPA0217 (354 aa).

It belongs to the UPF0597 family.

The chain is UPF0597 protein PPA0217 from Cutibacterium acnes (strain DSM 16379 / KPA171202) (Propionibacterium acnes).